Here is a 340-residue protein sequence, read N- to C-terminus: Ketol-acid reductoisomerase (NADP(+)) (340 aa).

A KARI N-terminal Rossmann domain is found at 1-182 (MRVYYDRDCD…GGGRSGIIET (182 aa)). NADP(+)-binding positions include 24–27 (YGSQ), R48, S51, S53, and 83–86 (DELQ). The active site involves H108. G134 serves as a coordination point for NADP(+). Residues 183–329 (NFREECETDL…ETLRGMMPWI (147 aa)) form the KARI C-terminal knotted domain. Mg(2+)-binding residues include D191, E195, E227, and E231. S252 lines the substrate pocket.

It belongs to the ketol-acid reductoisomerase family. Mg(2+) serves as cofactor.

It carries out the reaction (2R)-2,3-dihydroxy-3-methylbutanoate + NADP(+) = (2S)-2-acetolactate + NADPH + H(+). The catalysed reaction is (2R,3R)-2,3-dihydroxy-3-methylpentanoate + NADP(+) = (S)-2-ethyl-2-hydroxy-3-oxobutanoate + NADPH + H(+). It participates in amino-acid biosynthesis; L-isoleucine biosynthesis; L-isoleucine from 2-oxobutanoate: step 2/4. The protein operates within amino-acid biosynthesis; L-valine biosynthesis; L-valine from pyruvate: step 2/4. In terms of biological role, involved in the biosynthesis of branched-chain amino acids (BCAA). Catalyzes an alkyl-migration followed by a ketol-acid reduction of (S)-2-acetolactate (S2AL) to yield (R)-2,3-dihydroxy-isovalerate. In the isomerase reaction, S2AL is rearranged via a Mg-dependent methyl migration to produce 3-hydroxy-3-methyl-2-ketobutyrate (HMKB). In the reductase reaction, this 2-ketoacid undergoes a metal-dependent reduction by NADPH to yield (R)-2,3-dihydroxy-isovalerate. This is Ketol-acid reductoisomerase (NADP(+)) from Roseobacter denitrificans (strain ATCC 33942 / OCh 114) (Erythrobacter sp. (strain OCh 114)).